The chain runs to 252 residues: 3-dehydroquinate dehydratase (252 aa).

Residues Ser21, 46–48 (EWR), and Arg82 each bind 3-dehydroquinate. Residue His143 is the Proton donor/acceptor of the active site. Residue Lys170 is the Schiff-base intermediate with substrate of the active site. Residues Arg213, Ser232, and Gln236 each coordinate 3-dehydroquinate.

The protein belongs to the type-I 3-dehydroquinase family. As to quaternary structure, homodimer.

The enzyme catalyses 3-dehydroquinate = 3-dehydroshikimate + H2O. It functions in the pathway metabolic intermediate biosynthesis; chorismate biosynthesis; chorismate from D-erythrose 4-phosphate and phosphoenolpyruvate: step 3/7. In terms of biological role, involved in the third step of the chorismate pathway, which leads to the biosynthesis of aromatic amino acids. Catalyzes the cis-dehydration of 3-dehydroquinate (DHQ) and introduces the first double bond of the aromatic ring to yield 3-dehydroshikimate. This is 3-dehydroquinate dehydratase from Escherichia coli O127:H6 (strain E2348/69 / EPEC).